A 506-amino-acid polypeptide reads, in one-letter code: MNTMTLTPGQLSLSQLYDVWRHPVQLRLDASAIDGINASVACVNDIVAEGRTAYGINTGFGLLAQTRIADEDLQNLQRSLVLSHAAGVGDPLDDAMVRLIMVLKINSLARGFSGIRLSVIEALIALVNAGVYPLIPAKGSVGASGDLAPLAHLSLTLLGEGKARWQGEWLPAQTALKKAGLEPVALAAKEGLALLNGTQASTAFALRGLFEAQELFASAVVCGALTTEAVLGSRRPFDARIHAARGQQGQIDVARLFRHLLTDTSAIAESHHHCHKVQDPYSLRCQPQVMGACLTQLRQTKEVLLAEANAVSDNPLVFADAGEVISGGNFHAEPVAMAADNLALAIAEIGALSERRIALMMDKHMSQLPPFLVKNGGVNSGFMIAQVTAAALASENKALAHPHSVDSLPTSANQEDHVSMAPAAGRRLWEMAANTRGIIAVEWLAACQGIDLREGLTSSPLLEQARQTLREQVAHYTQDRFFAPDIECATALLAQGALQRLVPDFM.

Residues 143–145 (ASG) constitute a cross-link (5-imidazolinone (Ala-Gly)). Ser-144 carries the 2,3-didehydroalanine (Ser) modification.

It belongs to the PAL/histidase family. In terms of processing, contains an active site 4-methylidene-imidazol-5-one (MIO), which is formed autocatalytically by cyclization and dehydration of residues Ala-Ser-Gly.

It is found in the cytoplasm. It catalyses the reaction L-histidine = trans-urocanate + NH4(+). It participates in amino-acid degradation; L-histidine degradation into L-glutamate; N-formimidoyl-L-glutamate from L-histidine: step 1/3. This Salmonella dublin (strain CT_02021853) protein is Histidine ammonia-lyase.